The chain runs to 84 residues: Polyketide-8 synthase acyl carrier protein 1 (84 aa).

Residues 7–82 (AARKQEIKEI…GVYVVVSEAA (76 aa)) enclose the Carrier domain. O-(pantetheine 4'-phosphoryl)serine is present on Ser-42.

4'-phosphopantetheine is transferred from CoA to a specific serine of the apo-ACP-like protein.

Functionally, acyl carrier protein. The sequence is that of Polyketide-8 synthase acyl carrier protein 1 from Streptomyces avermitilis (strain ATCC 31267 / DSM 46492 / JCM 5070 / NBRC 14893 / NCIMB 12804 / NRRL 8165 / MA-4680).